A 161-amino-acid chain; its full sequence is SsrA-binding protein (161 aa).

The protein belongs to the SmpB family.

It localises to the cytoplasm. In terms of biological role, required for rescue of stalled ribosomes mediated by trans-translation. Binds to transfer-messenger RNA (tmRNA), required for stable association of tmRNA with ribosomes. tmRNA and SmpB together mimic tRNA shape, replacing the anticodon stem-loop with SmpB. tmRNA is encoded by the ssrA gene; the 2 termini fold to resemble tRNA(Ala) and it encodes a 'tag peptide', a short internal open reading frame. During trans-translation Ala-aminoacylated tmRNA acts like a tRNA, entering the A-site of stalled ribosomes, displacing the stalled mRNA. The ribosome then switches to translate the ORF on the tmRNA; the nascent peptide is terminated with the 'tag peptide' encoded by the tmRNA and targeted for degradation. The ribosome is freed to recommence translation, which seems to be the essential function of trans-translation. The sequence is that of SsrA-binding protein from Vesicomyosocius okutanii subsp. Calyptogena okutanii (strain HA).